The primary structure comprises 138 residues: Ribosome-binding factor A (138 aa).

The protein belongs to the RbfA family. Monomer. Binds 30S ribosomal subunits, but not 50S ribosomal subunits or 70S ribosomes.

Its subcellular location is the cytoplasm. In terms of biological role, one of several proteins that assist in the late maturation steps of the functional core of the 30S ribosomal subunit. Associates with free 30S ribosomal subunits (but not with 30S subunits that are part of 70S ribosomes or polysomes). Required for efficient processing of 16S rRNA. May interact with the 5'-terminal helix region of 16S rRNA. This chain is Ribosome-binding factor A, found in Pseudoalteromonas atlantica (strain T6c / ATCC BAA-1087).